A 112-amino-acid polypeptide reads, in one-letter code: Cytochrome c (112 aa).

3 residues coordinate heme c: cysteine 23, cysteine 26, and histidine 27. N6,N6,N6-trimethyllysine is present on lysine 81. Position 89 (methionine 89) interacts with heme c. At lysine 95 the chain carries N6,N6,N6-trimethyllysine.

The protein belongs to the cytochrome c family. Binds 1 heme c group covalently per subunit.

Its subcellular location is the mitochondrion intermembrane space. In terms of biological role, electron carrier protein. The oxidized form of the cytochrome c heme group can accept an electron from the heme group of the cytochrome c1 subunit of cytochrome reductase. Cytochrome c then transfers this electron to the cytochrome oxidase complex, the final protein carrier in the mitochondrial electron-transport chain. In Arabidopsis thaliana (Mouse-ear cress), this protein is Cytochrome c (CC-1).